A 571-amino-acid chain; its full sequence is Phosphoenolpyruvate-protein phosphotransferase (571 aa).

Residue histidine 189 is the Tele-phosphohistidine intermediate of the active site. Phosphoenolpyruvate is bound by residues arginine 296 and arginine 332. Mg(2+)-binding residues include glutamate 431 and aspartate 455. Residues 454 to 455 and arginine 465 each bind phosphoenolpyruvate; that span reads ND. The active-site Proton donor is the cysteine 502.

This sequence belongs to the PEP-utilizing enzyme family. In terms of assembly, homodimer. Mg(2+) is required as a cofactor.

Its subcellular location is the cytoplasm. It carries out the reaction L-histidyl-[protein] + phosphoenolpyruvate = N(pros)-phospho-L-histidyl-[protein] + pyruvate. Functionally, general (non sugar-specific) component of the phosphoenolpyruvate-dependent sugar phosphotransferase system (sugar PTS). This major carbohydrate active-transport system catalyzes the phosphorylation of incoming sugar substrates concomitantly with their translocation across the cell membrane. Enzyme I transfers the phosphoryl group from phosphoenolpyruvate (PEP) to the phosphoryl carrier protein (HPr). In Buchnera aphidicola subsp. Acyrthosiphon pisum (strain APS) (Acyrthosiphon pisum symbiotic bacterium), this protein is Phosphoenolpyruvate-protein phosphotransferase (ptsI).